Reading from the N-terminus, the 147-residue chain is UPF0306 protein YhbP (147 aa).

The protein belongs to the UPF0306 family.

The protein is UPF0306 protein YhbP of Salmonella arizonae (strain ATCC BAA-731 / CDC346-86 / RSK2980).